The following is a 129-amino-acid chain: Ribonuclease P protein component (129 aa).

It belongs to the RnpA family. Consists of a catalytic RNA component (M1 or rnpB) and a protein subunit.

The enzyme catalyses Endonucleolytic cleavage of RNA, removing 5'-extranucleotides from tRNA precursor.. Its function is as follows. RNaseP catalyzes the removal of the 5'-leader sequence from pre-tRNA to produce the mature 5'-terminus. It can also cleave other RNA substrates such as 4.5S RNA. The protein component plays an auxiliary but essential role in vivo by binding to the 5'-leader sequence and broadening the substrate specificity of the ribozyme. In Prochlorococcus marinus (strain MIT 9515), this protein is Ribonuclease P protein component.